We begin with the raw amino-acid sequence, 130 residues long: Sirohydrochlorin cobaltochelatase (130 aa).

H12 acts as the Proton acceptor in catalysis. H12 serves as a coordination point for Co(2+). H12 contacts Ni(2+). Residues E48 and 73 to 78 contribute to the substrate site; that span reads LASGVH. Residue H78 coordinates Co(2+). H78 contributes to the Ni(2+) binding site.

This sequence belongs to the CbiX family. CbiXS subfamily. In terms of assembly, homotetramer; dimer of dimers.

It carries out the reaction Co-sirohydrochlorin + 2 H(+) = sirohydrochlorin + Co(2+). The catalysed reaction is Ni-sirohydrochlorin + 2 H(+) = sirohydrochlorin + Ni(2+). The protein operates within cofactor biosynthesis; adenosylcobalamin biosynthesis; cob(II)yrinate a,c-diamide from sirohydrochlorin (anaerobic route): step 1/10. Functionally, catalyzes the insertion of Co(2+) into sirohydrochlorin as part of the anaerobic pathway to cobalamin biosynthesis (Potential). Involved in the biosynthesis of the unique nickel-containing tetrapyrrole coenzyme F430, the prosthetic group of methyl-coenzyme M reductase (MCR), which plays a key role in methanogenesis and anaerobic methane oxidation. Catalyzes the insertion of Ni(2+) into sirohydrochlorin to yield Ni-sirohydrochlorin. This is Sirohydrochlorin cobaltochelatase from Methanosarcina acetivorans (strain ATCC 35395 / DSM 2834 / JCM 12185 / C2A).